The chain runs to 194 residues: Auxin-induced protein 22A (194 aa).

An EAR-like (transcriptional repression) motif is present at residues 13 to 17 (LRLGL). Residues 40-62 (EIDDVGDENSSSGGGGDRKMENK) are disordered. In terms of domain architecture, PB1 spans 85–173 (KMYVKVSMDG…KRLRIMKRAD (89 aa)).

This sequence belongs to the Aux/IAA family. As to quaternary structure, homodimers and heterodimers.

It localises to the nucleus. Functionally, aux/IAA proteins are short-lived transcriptional factors that function as repressors of early auxin response genes at low auxin concentrations. Repression is thought to result from the interaction with auxin response factors (ARFs), proteins that bind to the auxin-responsive promoter element (AuxRE). Formation of heterodimers with ARF proteins may alter their ability to modulate early auxin response genes expression. In Vigna radiata var. radiata (Mung bean), this protein is Auxin-induced protein 22A (AUX22A).